Reading from the N-terminus, the 1109-residue chain is Carbamoyl phosphate synthase large chain (1109 aa).

Residues 1–402 (MPKRTDLKSV…ALQKALRSLE (402 aa)) form a carboxyphosphate synthetic domain region. 12 residues coordinate ATP: arginine 129, arginine 169, glycine 175, glycine 176, glutamate 208, isoleucine 210, glutamate 215, glycine 241, valine 242, histidine 243, glutamine 285, and glutamate 299. Residues 133–328 (KGVVERCGAE…IAKIATKLSL (196 aa)) form the ATP-grasp 1 domain. Mg(2+) contacts are provided by glutamine 285, glutamate 299, and asparagine 301. The Mn(2+) site is built by glutamine 285, glutamate 299, and asparagine 301. The tract at residues 403 to 546 (QKGSQLDFSS…YHYSAYDEED (144 aa)) is oligomerization domain. Positions 547-950 (EVALHSKPSI…AFAKSQAGAN (404 aa)) are carbamoyl phosphate synthetic domain. In terms of domain architecture, ATP-grasp 2 spans 677–868 (SRVLDKAGLV…MAKAAALIGT (192 aa)). ATP contacts are provided by arginine 713, arginine 752, leucine 754, glutamate 759, glycine 784, isoleucine 785, histidine 786, serine 787, glutamine 827, and glutamate 839. Positions 827, 839, and 841 each coordinate Mg(2+). Mn(2+) contacts are provided by glutamine 827, glutamate 839, and asparagine 841. In terms of domain architecture, MGS-like spans 951–1096 (NALPTEGKVF…QEHAAALGES (146 aa)). The tract at residues 951–1109 (NALPTEGKVF…AAAKADLQHA (159 aa)) is allosteric domain.

The protein belongs to the CarB family. Composed of two chains; the small (or glutamine) chain promotes the hydrolysis of glutamine to ammonia, which is used by the large (or ammonia) chain to synthesize carbamoyl phosphate. Tetramer of heterodimers (alpha,beta)4. Mg(2+) is required as a cofactor. Requires Mn(2+) as cofactor.

It carries out the reaction hydrogencarbonate + L-glutamine + 2 ATP + H2O = carbamoyl phosphate + L-glutamate + 2 ADP + phosphate + 2 H(+). The enzyme catalyses hydrogencarbonate + NH4(+) + 2 ATP = carbamoyl phosphate + 2 ADP + phosphate + 2 H(+). It functions in the pathway amino-acid biosynthesis; L-arginine biosynthesis; carbamoyl phosphate from bicarbonate: step 1/1. Its pathway is pyrimidine metabolism; UMP biosynthesis via de novo pathway; (S)-dihydroorotate from bicarbonate: step 1/3. Functionally, large subunit of the glutamine-dependent carbamoyl phosphate synthetase (CPSase). CPSase catalyzes the formation of carbamoyl phosphate from the ammonia moiety of glutamine, carbonate, and phosphate donated by ATP, constituting the first step of 2 biosynthetic pathways, one leading to arginine and/or urea and the other to pyrimidine nucleotides. The large subunit (synthetase) binds the substrates ammonia (free or transferred from glutamine from the small subunit), hydrogencarbonate and ATP and carries out an ATP-coupled ligase reaction, activating hydrogencarbonate by forming carboxy phosphate which reacts with ammonia to form carbamoyl phosphate. This Pseudarthrobacter chlorophenolicus (strain ATCC 700700 / DSM 12829 / CIP 107037 / JCM 12360 / KCTC 9906 / NCIMB 13794 / A6) (Arthrobacter chlorophenolicus) protein is Carbamoyl phosphate synthase large chain.